The chain runs to 344 residues: Probable dual-specificity RNA methyltransferase RlmN (344 aa).

Residue glutamate 89 is the Proton acceptor of the active site. The 235-residue stretch at 95–329 (TDQRLTVCVS…VSLRASRGLD (235 aa)) folds into the Radical SAM core domain. A disulfide bridge connects residues cysteine 102 and cysteine 334. Residues cysteine 109, cysteine 113, and cysteine 116 each coordinate [4Fe-4S] cluster. S-adenosyl-L-methionine contacts are provided by residues 156-157 (GE), serine 186, 215-217 (SLH), and asparagine 291. Catalysis depends on cysteine 334, which acts as the S-methylcysteine intermediate.

The protein belongs to the radical SAM superfamily. RlmN family. The cofactor is [4Fe-4S] cluster.

Its subcellular location is the cytoplasm. It catalyses the reaction adenosine(2503) in 23S rRNA + 2 reduced [2Fe-2S]-[ferredoxin] + 2 S-adenosyl-L-methionine = 2-methyladenosine(2503) in 23S rRNA + 5'-deoxyadenosine + L-methionine + 2 oxidized [2Fe-2S]-[ferredoxin] + S-adenosyl-L-homocysteine. It carries out the reaction adenosine(37) in tRNA + 2 reduced [2Fe-2S]-[ferredoxin] + 2 S-adenosyl-L-methionine = 2-methyladenosine(37) in tRNA + 5'-deoxyadenosine + L-methionine + 2 oxidized [2Fe-2S]-[ferredoxin] + S-adenosyl-L-homocysteine. Specifically methylates position 2 of adenine 2503 in 23S rRNA and position 2 of adenine 37 in tRNAs. This is Probable dual-specificity RNA methyltransferase RlmN from Parasynechococcus marenigrum (strain WH8102).